The following is a 374-amino-acid chain: CMP-N-acetylneuraminate-beta-1,4-galactoside alpha-2,3-sialyltransferase (374 aa).

The Cytoplasmic segment spans residues 1 to 8 (MGLLVFVR). A helical; Signal-anchor for type II membrane protein membrane pass occupies residues 9–28 (NLLLALCLFLVLGFLYYSAW). Over 29–374 (KLHLLQWEDS…RVITDLSSGI (346 aa)) the chain is Lumenal. N-linked (GlcNAc...) asparagine glycosylation is found at N79 and N170. A disulfide bridge connects residues C159 and C313.

Belongs to the glycosyltransferase 29 family. The soluble form derives from the membrane form by proteolytic processing. In terms of tissue distribution, found in all tissues tested. High expression found in brain, liver, kidney, colon, heart and lung.

It localises to the golgi apparatus. The protein localises to the golgi stack membrane. Its subcellular location is the secreted. It catalyses the reaction a beta-D-galactosyl-(1-&gt;4)-N-acetyl-beta-D-glucosaminyl derivative + CMP-N-acetyl-beta-neuraminate = an N-acetyl-alpha-neuraminyl-(2-&gt;3)-beta-D-galactosyl-(1-&gt;4)-N-acetyl-beta-D-glucosaminyl derivative + CMP + H(+). It functions in the pathway protein modification; protein glycosylation. Its function is as follows. Catalyzes the formation of the NeuAc-alpha-2,3-Gal-beta-1,4-GlcNAc-, NeuAc-alpha-2,3-Gal-beta-1,3-GlcNAc- and NeuAc-alpha-2,3-Gal-beta-1,3-GalNAc- sequences found in terminal carbohydrate groups of glycoproteins and glycolipids. The highest activity is toward Gal-beta-1,3-GlcNAc and the lowest toward Gal-beta-1,3-GalNAc. The chain is CMP-N-acetylneuraminate-beta-1,4-galactoside alpha-2,3-sialyltransferase (St3gal3) from Rattus norvegicus (Rat).